Consider the following 301-residue polypeptide: Acetylglutamate kinase (301 aa).

Substrate is bound by residues 68 to 69 (GG), R90, and N195.

The protein belongs to the acetylglutamate kinase family. ArgB subfamily.

The protein localises to the cytoplasm. It carries out the reaction N-acetyl-L-glutamate + ATP = N-acetyl-L-glutamyl 5-phosphate + ADP. It participates in amino-acid biosynthesis; L-arginine biosynthesis; N(2)-acetyl-L-ornithine from L-glutamate: step 2/4. Catalyzes the ATP-dependent phosphorylation of N-acetyl-L-glutamate. The protein is Acetylglutamate kinase of Pseudomonas fluorescens (strain ATCC BAA-477 / NRRL B-23932 / Pf-5).